The primary structure comprises 392 residues: GTPase Obg (392 aa).

In terms of domain architecture, Obg spans 1–159 (MKFIDEALIR…RDLQLELMLL (159 aa)). One can recognise an OBG-type G domain in the interval 160–333 (ADVGMLGLPN…LCRDIMDFIE (174 aa)). GTP is bound by residues 166–173 (GLPNAGKS), 191–195 (FTTLV), 213–216 (DIPG), 283–286 (NKID), and 314–316 (SAA). 2 residues coordinate Mg(2+): serine 173 and threonine 193. The tract at residues 361–392 (SEQVFTEDDQEEDDWDDWSEDDEEGVEIIYKP) is disordered. Over residues 365 to 386 (FTEDDQEEDDWDDWSEDDEEGV) the composition is skewed to acidic residues.

This sequence belongs to the TRAFAC class OBG-HflX-like GTPase superfamily. OBG GTPase family. In terms of assembly, monomer. Mg(2+) serves as cofactor.

Its subcellular location is the cytoplasm. Its function is as follows. An essential GTPase which binds GTP, GDP and possibly (p)ppGpp with moderate affinity, with high nucleotide exchange rates and a fairly low GTP hydrolysis rate. Plays a role in control of the cell cycle, stress response, ribosome biogenesis and in those bacteria that undergo differentiation, in morphogenesis control. The protein is GTPase Obg of Histophilus somni (strain 2336) (Haemophilus somnus).